The chain runs to 98 residues: Large ribosomal subunit protein bL28 (98 aa).

Part of the 50S ribosomal subunit.

This chain is Large ribosomal subunit protein bL28 (rpmB), found in Thermus thermophilus (strain ATCC 27634 / DSM 579 / HB8).